Here is a 289-residue protein sequence, read N- to C-terminus: Phospholipase A1 (289 aa).

A signal peptide spans 1-20 (MRTGPGWLLAAAALPFFACA). Topologically, residues 21–52 (QEATIDKVHDTPAVRGSIIANMLQEHDNPFTL) are periplasmic. The chain crosses the membrane as a beta stranded span at residues 53–65 (YPYESNYLLYTYT). At 66–84 (SDLNKKAIESYNWSDNANK) the chain is on the extracellular side. A beta stranded membrane pass occupies residues 85-99 (DEVKFQLSLAFPLWR). Residues 100–105 (GILGDN) are Periplasmic-facing. The beta stranded transmembrane segment at 106–118 (SLLGASYTQRSWW) threads the bilayer. Residues 119–128 (QLSNTGESAP) are Extracellular-facing. Ser126 is a binding site for Ca(2+). Residues 129 to 148 (FRETNYEPQLFLGFATDYSV) form a beta stranded membrane-spanning segment. Residues 149–150 (GD) lie on the Periplasmic side of the membrane. A beta stranded membrane pass occupies residues 151–164 (WTLRDAEFGYNHQS). Catalysis depends on His162, which acts as the Proton acceptor. Ser164 acts as the Nucleophile in catalysis. Residues 165 to 173 (NGRSDPTSR) are Extracellular-facing. 2 residues coordinate Ca(2+): Arg167 and Ser172. A beta stranded membrane pass occupies residues 174 to 186 (SWNRLYSRLMAQN). Topologically, residues 187–188 (GN) are periplasmic. A beta stranded membrane pass occupies residues 189–198 (WLVEVKPWYV). Residues 199 to 216 (IGDTSDNKNITKYMGYYQ) lie on the Extracellular side of the membrane. Residue Asp204 coordinates Ca(2+). A beta stranded membrane pass occupies residues 217–223 (LKIGYQL). The Periplasmic segment spans residues 224 to 225 (GE). Residues 226 to 234 (AVLSAKGQY) traverse the membrane as a beta stranded segment. Over 235–241 (NWNTGYG) the chain is Extracellular. The chain crosses the membrane as a beta stranded span at residues 242 to 250 (GAELGVSYP). Topologically, residues 251–255 (ITKHV) are periplasmic. The chain crosses the membrane as a beta stranded span at residues 256 to 265 (RFYTQVYSGY). Residues 266–274 (GESLIDYDF) are Extracellular-facing. Residues 275-286 (NQTRVGMGVMLN) form a beta stranded membrane-spanning segment. Residues 287-289 (DLF) lie on the Periplasmic side of the membrane.

The protein belongs to the phospholipase A1 family. Homodimer; dimerization is reversible, and the dimeric form is the active one. Ca(2+) serves as cofactor.

It localises to the cell outer membrane. It catalyses the reaction a 1,2-diacyl-sn-glycero-3-phosphocholine + H2O = a 2-acyl-sn-glycero-3-phosphocholine + a fatty acid + H(+). It carries out the reaction a 1,2-diacyl-sn-glycero-3-phosphocholine + H2O = a 1-acyl-sn-glycero-3-phosphocholine + a fatty acid + H(+). Functionally, hydrolysis of phosphatidylcholine with phospholipase A2 (EC 3.1.1.4) and phospholipase A1 (EC 3.1.1.32) activities. The chain is Phospholipase A1 (pldA) from Proteus vulgaris.